A 532-amino-acid chain; its full sequence is Phosphoenolpyruvate carboxykinase (ATP) (532 aa).

3 residues coordinate substrate: R60, Y194, and K200. ATP-binding positions include K200, H219, and 237 to 245; that span reads GLSGTGKTT. Mn(2+)-binding residues include K200 and H219. Mn(2+) is bound at residue D258. ATP contacts are provided by E286, R324, and T449. Residue R324 participates in substrate binding.

It belongs to the phosphoenolpyruvate carboxykinase (ATP) family. The cofactor is Mn(2+).

It is found in the cytoplasm. It carries out the reaction oxaloacetate + ATP = phosphoenolpyruvate + ADP + CO2. It participates in carbohydrate biosynthesis; gluconeogenesis. Functionally, involved in the gluconeogenesis. Catalyzes the conversion of oxaloacetate (OAA) to phosphoenolpyruvate (PEP) through direct phosphoryl transfer between the nucleoside triphosphate and OAA. This Cereibacter sphaeroides (strain ATCC 17025 / ATH 2.4.3) (Rhodobacter sphaeroides) protein is Phosphoenolpyruvate carboxykinase (ATP).